Consider the following 2144-residue polypeptide: Reducing polyketide synthase PKS2 (2144 aa).

The region spanning 10–436 (PMPLAIIGMS…GSNSHCIVRA (427 aa)) is the Ketosynthase family 3 (KS3) domain. Catalysis depends on for beta-ketoacyl synthase activity residues C183, H319, and H360. The interval 538–855 (VFAFTGQGAQ…VPSLHRGQNA (318 aa)) is malonyl-CoA:ACP transacylase (MAT). An N-terminal hotdog fold region spans residues 924–1058 (HDLLGSINSS…ALVKCEATTD (135 aa)). Residues 924–1214 (HDLLGSINSS…RSYSIDGTTD (291 aa)) form a dehydratase (DH) domain region. The PKS/mFAS DH domain occupies 924-1237 (HDLLGSINSS…LAVEATLAPQ (314 aa)). Positions 1076-1237 (HSCVGSPLLY…LAVEATLAPQ (162 aa)) are C-terminal hotdog fold. Positions 1461–1747 (GMPDSLYLQR…SETDSKKLLL (287 aa)) are enoyl reductase (ER) domain. Residues 1771–1948 (AVYLLVGGSG…PATSLALTAV (178 aa)) form a ketoreductase (KR) domain region. A Carrier domain is found at 2059-2136 (EATQLLLAAI…KIVDSVIVKR (78 aa)). Position 2096 is an O-(pantetheine 4'-phosphoryl)serine (S2096).

The protein operates within mycotoxin biosynthesis. In terms of biological role, reducing polyketide synthase (PKS); part of the Tox1A locus, one of the 2 loci that mediate the biosynthesis of T-toxin, a family of linear polyketides 37 to 45 carbons in length, of which the major component is 41 carbons, and which leads to high virulence to maize. One of the PKSs (PKS1 or PKS2) could synthesize a precursor, used subsequently by the other PKS as starter unit, to add additional carbons. Variability in the length of the final carbon backbone C35-47 could be achieved by varying the number of condensation cycles, or use of different starter or extender units or might be due to decarboxylation of the penultimate product, catalyzed by DEC1. Additional proteins are required for the biosynthesis of T-toxin, including oxidoreductases RED1, RED2, RED3, LAM1 and OXI1, as well as esterase TOX9. In Cochliobolus heterostrophus (strain C4 / ATCC 48331 / race T) (Southern corn leaf blight fungus), this protein is Reducing polyketide synthase PKS2.